The chain runs to 366 residues: Isocitrate dehydrogenase [NAD] subunit alpha, mitochondrial (366 aa).

Residues 1 to 27 constitute a mitochondrion transit peptide; that stretch reads MAGSAWVSKVSRLLGAFHNTKQVTRGF. Position 77 is an N6-succinyllysine (K77). T101 bears the Phosphothreonine mark. The substrate site is built by R115, R125, and R146. K223 carries the N6-acetyllysine modification. D233, D257, and D261 together coordinate Mg(2+). K343 is modified (N6-acetyllysine; alternate). K343 is subject to N6-succinyllysine; alternate. N6-succinyllysine is present on K350.

This sequence belongs to the isocitrate and isopropylmalate dehydrogenases family. Heterooligomer of subunits alpha (IDH3A), beta (IDH3B), and gamma (IDH3G) in the apparent ratio of 2:1:1. The heterodimer containing one IDH3A and one IDH3B subunit and the heterodimer containing one IDH3A and one IDH3G subunit assemble into a heterotetramer (which contains two subunits of IDH3A, one of IDH3B and one of IDH3G) and further into the heterooctamer. Mg(2+) is required as a cofactor. It depends on Mn(2+) as a cofactor. In terms of tissue distribution, expressed in brown adipose tissue (BAT).

The protein resides in the mitochondrion. It carries out the reaction D-threo-isocitrate + NAD(+) = 2-oxoglutarate + CO2 + NADH. With respect to regulation, the heterotetramer and the heterodimer composed of IDH3A and IDH3G subunits can be allosterically activated by citrate (CIT) or/and ADP, and the two activators can act independently or synergistically. The heterodimer composed of IDH3A and IDH3B subunits cannot be allosterically regulated and the allosteric regulation of the heterotetramer is through the IDH3G subunit and not the IDH3B subunit. The IDH3G subunit contains the allosteric site which consists of a CIT-binding site and an ADP-binding site, and the binding of CIT and ADP causes conformational changes at the allosteric site which are transmitted to the active site in the catalytic subunit (IDH3A) through a cascade of conformational changes at the heterodimer interface, leading to stabilization of the isocitrate-binding at the active site and thus activation of the enzyme. ATP can activate the heterotetramer and the heterodimer composed of IDH3A and IDH3G subunits at low concentrations but inhibits their activities at high concentrations, whereas ATP exhibits only inhibitory effect on the heterodimer composed of IDH3A and IDH3B subunits. Functionally, catalytic subunit of the enzyme which catalyzes the decarboxylation of isocitrate (ICT) into alpha-ketoglutarate. The heterodimer composed of the alpha (IDH3A) and beta (IDH3B) subunits and the heterodimer composed of the alpha (IDH3A) and gamma (IDH3G) subunits, have considerable basal activity but the full activity of the heterotetramer (containing two subunits of IDH3A, one of IDH3B and one of IDH3G) requires the assembly and cooperative function of both heterodimers. This chain is Isocitrate dehydrogenase [NAD] subunit alpha, mitochondrial, found in Rattus norvegicus (Rat).